A 375-amino-acid chain; its full sequence is Killer cell immunoglobulin-like receptor 2DL5B (375 aa).

Positions 1 to 21 are cleaved as a signal peptide; sequence MSLMVVSMACVGFFLLQGAWT. Residues 22–238 lie on the Extracellular side of the membrane; that stretch reads HEGGQDKPLL…PSSKTGIRRH (217 aa). 2 Ig-like C2-type domains span residues 42 to 102 and 137 to 200; these read GGHV…HPRS and GENV…LHDS. 2 cysteine pairs are disulfide-bonded: Cys49–Cys95 and Cys144–Cys193. The disordered stretch occupies residues 213–233; the sequence is VSVTGNSSSSSSSPTEPSSKT. Asn218 carries N-linked (GlcNAc...) asparagine glycosylation. Residues 219–231 are compositionally biased toward low complexity; that stretch reads SSSSSSSPTEPSS. The chain crosses the membrane as a helical span at residues 239 to 259; sequence LHILIGTSVAIILFIILFFFL. Residues 260–375 lie on the Cytoplasmic side of the membrane; it reads LHCCCSNKKN…ASSHVPAAGI (116 aa). Positions 334-375 are disordered; it reads AKPRSLSPAHKHHSQALRGSSRETTALSQNRVASSHVPAAGI. The segment covering 355-366 has biased composition (polar residues); it reads RETTALSQNRVA.

The protein belongs to the immunoglobulin superfamily.

The protein localises to the cell membrane. Receptor on natural killer (NK) cells for HLA-C alleles. Inhibits the activity of NK cells thus preventing cell lysis. This is Killer cell immunoglobulin-like receptor 2DL5B (KIR2DL5B) from Homo sapiens (Human).